The following is a 264-amino-acid chain: Thymidylate synthase (264 aa).

Arginine 21 is a binding site for dUMP. Histidine 51 is a (6R)-5,10-methylene-5,6,7,8-tetrahydrofolate binding site. 126–127 (RR) contacts dUMP. The active-site Nucleophile is cysteine 146. Residues 166 to 169 (RSCD), asparagine 177, and 207 to 209 (HLY) contribute to the dUMP site. Position 169 (aspartate 169) interacts with (6R)-5,10-methylene-5,6,7,8-tetrahydrofolate. Alanine 263 lines the (6R)-5,10-methylene-5,6,7,8-tetrahydrofolate pocket.

The protein belongs to the thymidylate synthase family. Bacterial-type ThyA subfamily. In terms of assembly, homodimer.

Its subcellular location is the cytoplasm. The enzyme catalyses dUMP + (6R)-5,10-methylene-5,6,7,8-tetrahydrofolate = 7,8-dihydrofolate + dTMP. It functions in the pathway pyrimidine metabolism; dTTP biosynthesis. Functionally, catalyzes the reductive methylation of 2'-deoxyuridine-5'-monophosphate (dUMP) to 2'-deoxythymidine-5'-monophosphate (dTMP) while utilizing 5,10-methylenetetrahydrofolate (mTHF) as the methyl donor and reductant in the reaction, yielding dihydrofolate (DHF) as a by-product. This enzymatic reaction provides an intracellular de novo source of dTMP, an essential precursor for DNA biosynthesis. The polypeptide is Thymidylate synthase (Shewanella denitrificans (strain OS217 / ATCC BAA-1090 / DSM 15013)).